Reading from the N-terminus, the 385-residue chain is Cell division protein FtsZ (385 aa).

GTP-binding positions include 20–24, 107–109, glutamate 138, arginine 142, and asparagine 186; these read GGGGN and GTG.

The protein belongs to the FtsZ family. As to quaternary structure, homodimer. Polymerizes to form a dynamic ring structure in a strictly GTP-dependent manner. Interacts directly with several other division proteins.

It localises to the cytoplasm. Functionally, essential cell division protein that forms a contractile ring structure (Z ring) at the future cell division site. The regulation of the ring assembly controls the timing and the location of cell division. One of the functions of the FtsZ ring is to recruit other cell division proteins to the septum to produce a new cell wall between the dividing cells. Binds GTP and shows GTPase activity. The polypeptide is Cell division protein FtsZ (Buchnera aphidicola subsp. Baizongia pistaciae (strain Bp)).